Reading from the N-terminus, the 248-residue chain is Ubiquinone/menaquinone biosynthesis C-methyltransferase UbiE (248 aa).

Residues S68 and D92 each contribute to the S-adenosyl-L-methionine site.

The protein belongs to the class I-like SAM-binding methyltransferase superfamily. MenG/UbiE family.

The catalysed reaction is a 2-demethylmenaquinol + S-adenosyl-L-methionine = a menaquinol + S-adenosyl-L-homocysteine + H(+). It catalyses the reaction a 2-methoxy-6-(all-trans-polyprenyl)benzene-1,4-diol + S-adenosyl-L-methionine = a 5-methoxy-2-methyl-3-(all-trans-polyprenyl)benzene-1,4-diol + S-adenosyl-L-homocysteine + H(+). Its pathway is quinol/quinone metabolism; menaquinone biosynthesis; menaquinol from 1,4-dihydroxy-2-naphthoate: step 2/2. It participates in cofactor biosynthesis; ubiquinone biosynthesis. In terms of biological role, methyltransferase required for the conversion of demethylmenaquinol (DMKH2) to menaquinol (MKH2) and the conversion of 2-polyprenyl-6-methoxy-1,4-benzoquinol (DDMQH2) to 2-polyprenyl-3-methyl-6-methoxy-1,4-benzoquinol (DMQH2). This is Ubiquinone/menaquinone biosynthesis C-methyltransferase UbiE from Rickettsia rickettsii (strain Iowa).